Reading from the N-terminus, the 88-residue chain is SPbeta prophage-derived protein BhlB (88 aa).

2 helical membrane passes run 15-35 (LLAI…AFII) and 45-65 (DCLY…AAWF).

This sequence belongs to the SPP1 holin family.

The protein resides in the cell membrane. May be involved in the secretion of the autolysin BlyA. The chain is SPbeta prophage-derived protein BhlB (bhlB) from Bacillus subtilis (strain 168).